The chain runs to 379 residues: Presenilin-associated rhomboid-like protein, mitochondrial (379 aa).

The transit peptide at 1–52 (MAWRGWAQRGWGCGQAWAASVGGRSCEELTAALTPPRLLGRRFNFFIQQKCG) directs the protein to the mitochondrion. The Mitochondrial matrix portion of the chain corresponds to 53 to 101 (FRKAPRKVEPRRSDTGTSGEAYKRSALIPPVEETVFYPSPYPIRSLIKP). Residue S65 is modified to Phosphoserine. T69 is modified (phosphothreonine). Residue S70 is modified to Phosphoserine. Residues 102–121 (LFFTVGFTGCAFGSAAIWQY) form a helical membrane-spanning segment. The Mitochondrial intermembrane segment spans residues 122–167 (ESLKSRVQSYFDGIKADWLDSIRPQKEGDFRKEINKWWNNLSDGQR). The helical transmembrane segment at 168–187 (TVTGIIAANVLVFCLWRVPS) threads the bilayer. The Mitochondrial matrix portion of the chain corresponds to 188–207 (LQRTMIRYFTSNPASKVLCS). Residues 208–230 (PMLLSTFSHFSLFHMAANMYVLW) traverse the membrane as a helical segment. Over 231-244 (SFSSSIVNILGQEQ) the chain is Mitochondrial intermembrane. Residues 245-262 (FMAVYLSAGVISNFVSYV) form a helical membrane-spanning segment. The Mitochondrial matrix portion of the chain corresponds to 263-273 (GKVATGRYGPS). Residues 274–292 (LGASGAIMTVLAAVCTKIP) form a helical membrane-spanning segment. The active-site Nucleophile is S277. The Mitochondrial intermembrane portion of the chain corresponds to 293-295 (EGR). A helical transmembrane segment spans residues 296–318 (LAIIFLPMFTFTAGNALKAIIAM). Residues 319–332 (DTAGMILGWKFFDH) are Mitochondrial matrix-facing. Residues 333–354 (AAHLGGALFGIWYVTYGHELIW) traverse the membrane as a helical segment. Residue H335 is part of the active site. At 355–379 (KNREPLVKIWHEIRTNGPKKGGGSK) the chain is on the mitochondrial intermembrane side.

Belongs to the peptidase S54 family. Interacts with PSEN1 and PSEN2. Binds OPA1. Post-translationally, P-beta is proteolytically processed (beta-cleavage) in a PARL-dependent manner.

It is found in the mitochondrion inner membrane. It localises to the nucleus. It catalyses the reaction Cleaves type-1 transmembrane domains using a catalytic dyad composed of serine and histidine that are contributed by different transmembrane domains.. Functionally, required for the control of apoptosis during postnatal growth. Essential for proteolytic processing of an antiapoptotic form of OPA1 which prevents the release of mitochondrial cytochrome c in response to intrinsic apoptotic signals. Required for the maturation of PINK1 into its 52kDa mature form after its cleavage by mitochondrial-processing peptidase (MPP). Promotes cleavage of serine/threonine-protein phosphatase PGAM5 in damaged mitochondria in response to loss of mitochondrial membrane potential. Mediates differential cleavage of PINK1 and PGAM5 depending on the health status of mitochondria, disassociating from PINK1 and associating with PGAM5 in response to mitochondrial membrane potential loss. Required for processing of CLPB into a form with higher protein disaggregase activity by removing an autoinhibitory N-terminal peptide. Promotes processing of DIABLO/SMAC in the mitochondrion which is required for DIABLO apoptotic activity. Also required for cleavage of STARD7 and TTC19. Promotes changes in mitochondria morphology regulated by phosphorylation of P-beta domain. This chain is Presenilin-associated rhomboid-like protein, mitochondrial (PARL), found in Pongo abelii (Sumatran orangutan).